We begin with the raw amino-acid sequence, 92 residues long: MKGACVLVLLWAALLLISGGNCEICPAVKRDVDLFLTGTPDEYVEQVAQYKALPVVLENARILKNCVDAKMTEEDKENALSVLDKIYTSPLC.

The signal sequence occupies residues 1-22 (MKGACVLVLLWAALLLISGGNC).

It belongs to the secretoglobin family. Heterotetramer composed of two non-covalently linked disulfide-linked heterodimer of chains 1 and 2. In terms of tissue distribution, saliva and sebaceous glands.

The protein resides in the secreted. This chain is Major allergen I polypeptide chain 1 (CH1), found in Felis catus (Cat).